The following is a 303-amino-acid chain: MASTQQCLASLARLSLSTPTRAALPTIPKFLVPSVAASQVRYATNNPNKGGAKKAPKKKKQYKFFKSWDLTGQQQFSLCDAMRYLRAVEVGQPPLSVKYEVHVKLRTKKNGPVVRDRVRLPTPVKTDTRIAVICPEGSALQEEAKNLGAVMAGEETLFEAIRSGNFPFNKLLCHTESEGALRKANVGKLLGPKGLMPSGKTKTITNNLEATFRDMIGMDEYRERNGVVRMAVGQLGFTPKQLAENIRVFMAKIKSDIGKLDDTTPKMVEEVVLSTTHGPGMSLNAEFAPTDDKIKPEDLESVM.

The protein belongs to the universal ribosomal protein uL1 family. As to quaternary structure, component of the mitochondrial large ribosomal subunit (mt-LSU). Mature N.crassa 74S mitochondrial ribosomes consist of a small (37S) and a large (54S) subunit. The 37S small subunit contains a 16S ribosomal RNA (16S mt-rRNA) and 32 different proteins. The 54S large subunit contains a 23S rRNA (23S mt-rRNA) and 42 different proteins.

The protein resides in the mitochondrion. Component of the mitochondrial ribosome (mitoribosome), a dedicated translation machinery responsible for the synthesis of mitochondrial genome-encoded proteins, including at least some of the essential transmembrane subunits of the mitochondrial respiratory chain. The mitoribosomes are attached to the mitochondrial inner membrane and translation products are cotranslationally integrated into the membrane. This is Large ribosomal subunit protein uL1m (mrpl1) from Neurospora crassa (strain ATCC 24698 / 74-OR23-1A / CBS 708.71 / DSM 1257 / FGSC 987).